Reading from the N-terminus, the 193-residue chain is Xanthine phosphoribosyltransferase (193 aa).

Residues Leu20 and Asn27 each coordinate xanthine. Residue 128 to 132 (ASGGT) participates in 5-phospho-alpha-D-ribose 1-diphosphate binding. Lys156 is a xanthine binding site.

Belongs to the purine/pyrimidine phosphoribosyltransferase family. Xpt subfamily. In terms of assembly, homodimer.

Its subcellular location is the cytoplasm. It carries out the reaction XMP + diphosphate = xanthine + 5-phospho-alpha-D-ribose 1-diphosphate. It functions in the pathway purine metabolism; XMP biosynthesis via salvage pathway; XMP from xanthine: step 1/1. Converts the preformed base xanthine, a product of nucleic acid breakdown, to xanthosine 5'-monophosphate (XMP), so it can be reused for RNA or DNA synthesis. The protein is Xanthine phosphoribosyltransferase of Deinococcus deserti (strain DSM 17065 / CIP 109153 / LMG 22923 / VCD115).